The chain runs to 177 residues: Protein C (177 aa).

A compositionally biased stretch (polar residues) spans M1 to R10. Residues M1–L38 form a disordered region.

This sequence belongs to the morbillivirus protein C family.

This Rinderpest virus (strain RBOK) (RDV) protein is Protein C (P/V/C).